The sequence spans 268 residues: Small ribosomal subunit protein uS3 (268 aa).

The KH type-2 domain occupies 38–106; that stretch reads IRKLLATGME…QVQLNILEVK (69 aa). The tract at residues 218–268 is disordered; it reads VAAPAGDRPRRERPSRPRRSGATGTTATSTEAGRAATATADAPATTEQKEG. Residues 237 to 268 show a composition bias toward low complexity; the sequence is SGATGTTATSTEAGRAATATADAPATTEQKEG.

The protein belongs to the universal ribosomal protein uS3 family. In terms of assembly, part of the 30S ribosomal subunit. Forms a tight complex with proteins S10 and S14.

Its function is as follows. Binds the lower part of the 30S subunit head. Binds mRNA in the 70S ribosome, positioning it for translation. The protein is Small ribosomal subunit protein uS3 of Rhodococcus jostii (strain RHA1).